We begin with the raw amino-acid sequence, 25 residues long: Non-specific lipid-transfer protein 3 (25 aa).

As to expression, seeds (at protein level).

Functionally, plant non-specific lipid-transfer proteins transfer phospholipids as well as galactolipids across membranes. May play a role in wax or cutin deposition in the cell walls of expanding epidermal cells and certain secretory tissues. Has antibacterial and antifungal activity. Displays antibacterial activity towards both Gram-negative bacteria, P.carotovorum (IC(50)=11.5 uM) and P.syringae (IC(50)=12.0 uM), and Gram-positive bacterium C.michiganensis subsp michiganense (IC(50)=11.2 uM). Also displays antifungal activity towards A.niger VKM F-33 (IC(50)=1.05 uM) and B.cinerea TSKHA (IC(50)=1.88 uM) and relatively moderate activity towards B.sorokiniana VKM F-1448 (IC(50)=1.55 uM). Displays some inhibitory activity towards P.infestans OSV12. This Nigella sativa (Black cumin) protein is Non-specific lipid-transfer protein 3.